The following is a 743-amino-acid chain: FHF complex subunit HOOK-interacting protein 2B (743 aa).

The disordered stretch occupies residues 186–219 (CGEPTALPKDTTSHGDKDCSHDGAPARPQLDGES). Positions 196–206 (TTSHGDKDCSH) are enriched in basic and acidic residues.

Belongs to the FHIP family. In terms of tissue distribution, expressed in liver.

Able to activate MAPK/ERK and TGFB signaling pathways. May regulate the activity of genes involved in intestinal barrier function and immunoprotective inflammation. May play a role in cell proliferation. This is FHF complex subunit HOOK-interacting protein 2B from Homo sapiens (Human).